The following is a 1562-amino-acid chain: NAC-alpha domain-containing protein 1 (1562 aa).

Low complexity predominate over residues 1–13 (MPGEAARAELLLP). 8 disordered regions span residues 1–24 (MPGEAARAELLLPEADRPGPRTDL), 56–110 (FLPS…TEAP), 131–226 (SPRA…ADGD), 249–288 (SGWGLSPQGSMVDERELHPAGTPEPPSSESSLSADSSSSW), 327–365 (TPLSPEEEEEEAVADPDPGGDLAGEGEEDSTSASFLQSL), 381–458 (RDDT…GAYL), 503–941 (TPQA…EPLA), and 953–1423 (GCAP…AMSK). Residues 195-208 (GDARDSEAELRDEL) are compositionally biased toward basic and acidic residues. Residues 275 to 287 (SSESSLSADSSSS) show a composition bias toward low complexity. Acidic residues predominate over residues 331–340 (PEEEEEEAVA). Residues 385–397 (SAASSDSDSASYA) show a composition bias toward low complexity. Composition is skewed to polar residues over residues 449-458 (PQTSDRGAYL) and 550-564 (QEETSLTLCPDSPQN). The segment covering 992 to 1007 (PAALDQVQQDDPQPAA) has biased composition (low complexity). Over residues 1048-1074 (PGREACLEARAHTGDGAKPDSPQKETL) the composition is skewed to basic and acidic residues. S1068 carries the post-translational modification Phosphoserine. Low complexity-rich tracts occupy residues 1172-1182 (APTSAPTSQQP) and 1231-1241 (APGTLAGAALP). A compositionally biased stretch (acidic residues) spans 1254-1264 (PQEDSVEDEEP). Low complexity-rich tracts occupy residues 1265–1284 (PGSLGLPPPQAGVQPAAAAV), 1298–1308 (SLSPHSPLLSP), and 1335–1344 (QSPAGPQGLS). Residues 1348 to 1357 (QQEDEDSLEE) show a composition bias toward acidic residues. Phosphoserine is present on S1354. In terms of domain architecture, NAC-A/B spans 1411–1476 (SRSEKKARKA…AKIEDLSQQV (66 aa)).

This sequence belongs to the NAC-alpha family.

It localises to the cytoplasm. The protein localises to the nucleus. In terms of biological role, may prevent inappropriate targeting of non-secretory polypeptides to the endoplasmic reticulum (ER). May bind to nascent polypeptide chains as they emerge from the ribosome and block their interaction with the signal recognition particle (SRP), which normally targets nascent secretory peptides to the ER. May also reduce the inherent affinity of ribosomes for protein translocation sites in the ER membrane (M sites). The polypeptide is NAC-alpha domain-containing protein 1 (NACAD) (Homo sapiens (Human)).